The chain runs to 357 residues: MTNPSAGTLTIERKQSHVELCLHANVAFSGKTTGFERFYFEHNALPEIAFAEIDCSTTFLGRHIGAPLMVSSMTGGYSEASTLNRQLAEAAEHFQIPLGVGSMRQTLESPLHRESFAVTRKYAPTTLLFANIGAPEVAQGLSQSDVAMMLDLLRADGLIVHLNAAQELFQPEGNTNFHRVLEEIHNLCATTNVPIIVKEVGNGIGAAVAEQLMEAGVQALDVAGAGGISWQKVEEYRFLQQFGHEHRFSSNALDELLNWGIPTTNCLLDIAELKRLQPQFQQIEIIASGGVSSGMDVAKSLAMGAQLAASARHLLHALHAGTLTATIEQWLNDLKAAMFLTGAATVDALRTKSLLNH.

Substrate is bound at residue 13-14; that stretch reads RK. Residues Ser-71, 72-74, Ser-102, and Asn-131 contribute to the FMN site; that span reads SMT. Residue 102 to 104 participates in substrate binding; that stretch reads SMR. Gln-166 is a substrate binding site. Glu-167 lines the Mg(2+) pocket. FMN is bound by residues Lys-198 and 311-312; that span reads AR.

The protein belongs to the IPP isomerase type 2 family. As to quaternary structure, homooctamer. Dimer of tetramers. FMN is required as a cofactor. Requires NADPH as cofactor. Mg(2+) serves as cofactor.

The protein resides in the cytoplasm. It carries out the reaction isopentenyl diphosphate = dimethylallyl diphosphate. Its function is as follows. Involved in the biosynthesis of isoprenoids. Catalyzes the 1,3-allylic rearrangement of the homoallylic substrate isopentenyl (IPP) to its allylic isomer, dimethylallyl diphosphate (DMAPP). The protein is Isopentenyl-diphosphate delta-isomerase of Chlorobium chlorochromatii (strain CaD3).